The primary structure comprises 508 residues: Steroid 17-alpha-hydroxylase/17,20 lyase (508 aa).

C442 lines the heme pocket.

It belongs to the cytochrome P450 family. Requires heme as cofactor.

Its subcellular location is the endoplasmic reticulum membrane. The protein localises to the microsome membrane. It carries out the reaction a C21-steroid + reduced [NADPH--hemoprotein reductase] + O2 = a 17alpha-hydroxy-C21-steroid + oxidized [NADPH--hemoprotein reductase] + H2O + H(+). It catalyses the reaction progesterone + reduced [NADPH--hemoprotein reductase] + O2 = 17alpha-hydroxyprogesterone + oxidized [NADPH--hemoprotein reductase] + H2O + H(+). The catalysed reaction is pregnenolone + reduced [NADPH--hemoprotein reductase] + O2 = 17alpha-hydroxypregnenolone + oxidized [NADPH--hemoprotein reductase] + H2O + H(+). The enzyme catalyses 17alpha-hydroxyprogesterone + reduced [NADPH--hemoprotein reductase] + O2 = androst-4-ene-3,17-dione + acetate + oxidized [NADPH--hemoprotein reductase] + H2O + 2 H(+). It carries out the reaction 17alpha-hydroxyprogesterone + reduced [NADPH--hemoprotein reductase] + O2 = 16alpha,17alpha-dihydroxyprogesterone + oxidized [NADPH--hemoprotein reductase] + H2O + H(+). It catalyses the reaction 16alpha,17alpha-dihydroxyprogesterone + reduced [NADPH--hemoprotein reductase] + O2 = 6beta,16alpha,17alpha-trihydroxyprogesterone + oxidized [NADPH--hemoprotein reductase] + H2O + H(+). The catalysed reaction is 17alpha-hydroxypregnenolone + reduced [NADPH--hemoprotein reductase] + O2 = 3beta-hydroxyandrost-5-en-17-one + acetate + oxidized [NADPH--hemoprotein reductase] + H2O + 2 H(+). The enzyme catalyses 16alpha,17alpha-dihydroxypregnenolone + reduced [NADPH--hemoprotein reductase] + O2 = 3beta,16alpha-dihydroxy-androst-5-en-17-one + acetate + oxidized [NADPH--hemoprotein reductase] + H2O + 2 H(+). It carries out the reaction 3beta-hydroxyandrost-5-en-17-one + reduced [NADPH--hemoprotein reductase] + O2 = 3beta,16alpha-dihydroxy-androst-5-en-17-one + oxidized [NADPH--hemoprotein reductase] + H2O + H(+). It catalyses the reaction androst-4-ene-3,17-dione + reduced [NADPH--hemoprotein reductase] + O2 = 16alpha-hydroxyandrost-4-ene-3,17-dione + oxidized [NADPH--hemoprotein reductase] + H2O + H(+). The protein operates within steroid hormone biosynthesis. It participates in steroid biosynthesis; glucocorticoid biosynthesis. Regulated predominantly by intracellular cAMP levels. The 17,20-lyase activity is stimulated by cytochrome b5, which acts as an allosteric effector increasing the Vmax of the lyase activity. Functionally, a cytochrome P450 monooxygenase involved in corticoid and androgen biosynthesis. Catalyzes 17-alpha hydroxylation of C21 steroids, which is common for both pathways. A second oxidative step, required only for androgen synthesis, involves an acyl-carbon cleavage. The 17-alpha hydroxy intermediates, as part of adrenal glucocorticoids biosynthesis pathway, are precursors of cortisol. Hydroxylates steroid hormones, pregnenolone and progesterone to form 17-alpha hydroxy metabolites, followed by the cleavage of the C17-C20 bond to form C19 steroids, dehydroepiandrosterone (DHEA) and androstenedione. Has 16-alpha hydroxylase activity. Catalyzes 16-alpha hydroxylation of 17-alpha hydroxy pregnenolone, followed by the cleavage of the C17-C20 bond to form 16-alpha-hydroxy DHEA. Also 16-alpha hydroxylates androgens, relevant for estriol synthesis. Mechanistically, uses molecular oxygen inserting one oxygen atom into a substrate, and reducing the second into a water molecule, with two electrons provided by NADPH via cytochrome P450 reductase (CPR; NADPH-ferrihemoprotein reductase). This Equus caballus (Horse) protein is Steroid 17-alpha-hydroxylase/17,20 lyase (CYP17A1).